Reading from the N-terminus, the 769-residue chain is Elongation factor G, mitochondrial (769 aa).

The N-terminal 42 residues, 1–42 (MSKFLRGISSISSASLKARASNFGVFHGVCSARNLHQSRLCL), are a transit peptide targeting the mitochondrion. In terms of domain architecture, tr-type G spans 74 to 356 (TRLRNIGVSA…AVVDYLPQPN (283 aa)). Residues 83-90 (AHIDSGKT), 154-158 (DTPGH), and 208-211 (NKMD) each bind GTP.

The protein belongs to the TRAFAC class translation factor GTPase superfamily. Classic translation factor GTPase family. EF-G/EF-2 subfamily.

The protein resides in the mitochondrion. Its pathway is protein biosynthesis; polypeptide chain elongation. In terms of biological role, mitochondrial GTPase that catalyzes the GTP-dependent ribosomal translocation step during translation elongation. During this step, the ribosome changes from the pre-translocational (PRE) to the post-translocational (POST) state as the newly formed A-site-bound peptidyl-tRNA and P-site-bound deacylated tRNA move to the P and E sites, respectively. Catalyzes the coordinated movement of the two tRNA molecules, the mRNA and conformational changes in the ribosome. The protein is Elongation factor G, mitochondrial of Debaryomyces hansenii (strain ATCC 36239 / CBS 767 / BCRC 21394 / JCM 1990 / NBRC 0083 / IGC 2968) (Yeast).